The chain runs to 184 residues: Ribosome maturation factor RimM (184 aa).

In terms of domain architecture, PRC barrel spans aspartate 93–leucine 165.

It belongs to the RimM family. In terms of assembly, binds ribosomal protein uS19.

It localises to the cytoplasm. Functionally, an accessory protein needed during the final step in the assembly of 30S ribosomal subunit, possibly for assembly of the head region. Essential for efficient processing of 16S rRNA. May be needed both before and after RbfA during the maturation of 16S rRNA. It has affinity for free ribosomal 30S subunits but not for 70S ribosomes. The protein is Ribosome maturation factor RimM of Paenarthrobacter aurescens (strain TC1).